A 501-amino-acid polypeptide reads, in one-letter code: Ammonium transporter 1 member 1 (501 aa).

10 consecutive transmembrane segments (helical) span residues 8 to 28 (LAVL…GQLG), 46 to 66 (LLFS…LCAG), 81 to 101 (VLDA…FAFG), 128 to 148 (FLYQ…SIAE), 152 to 172 (FVAY…VVSH), 199 to 219 (FAGS…GALI), 243 to 263 (LVVL…PGSF), 333 to 353 (VVEP…LLGC), 366 to 386 (LEAA…TALF), and 419 to 439 (LIQI…LFFI). Position 460 is a phosphothreonine (T460). Residues S475, S488, S490, and S492 each carry the phosphoserine modification.

The protein belongs to the ammonia transporter channel (TC 1.A.11.2) family. As to quaternary structure, self interacts. Interacts with the receptor protein kinases CEPR2, At2g28990 and PAM74. In terms of tissue distribution, highly expressed in roots. Expressed in root tips, root hairs, root epidermis, rhizodermis, cortex and pericycle. Expressed in leaves epidermal and mesophyll cells.

The protein resides in the cell membrane. In terms of biological role, high affinity ammonium transporter probably involved in ammonium uptake from the soil, long-distance transport to the shoots and re-uptake of apoplastic ammonium that derives from photorespiration in shoots. Contributes with AMT1-3 to the overall ammonium uptake capacity in roots under nitrogen-deficiency conditions. This Arabidopsis thaliana (Mouse-ear cress) protein is Ammonium transporter 1 member 1 (AMT1-1).